Here is a 363-residue protein sequence, read N- to C-terminus: Crh-like protein 3 (363 aa).

A signal peptide spans 1 to 19; sequence MSLLYLVALFVASICSVTA. Cysteine 25 and cysteine 32 are joined by a disulfide. One can recognise a GH16 domain in the interval 26-237; sequence NPLTTTCPPD…YSKAPFTMVL (212 aa). N-linked (GlcNAc...) asparagine glycans are attached at residues asparagine 41, asparagine 47, and asparagine 56. Residue glutamate 118 is the Nucleophile of the active site. The active-site Proton donor is glutamate 122. Glutamate 122 contacts chitin. N-linked (GlcNAc...) asparagine glycosylation is found at asparagine 127, asparagine 141, and asparagine 161. Residues arginine 203, tryptophan 207, and threonine 218 each coordinate chitin. Asparagine 252 and asparagine 269 each carry an N-linked (GlcNAc...) asparagine glycan. The helical transmembrane segment at 298 to 318 threads the bilayer; it reads VYIGAGCVGAALLAGFIFFFI.

The protein belongs to the glycosyl hydrolase 16 family. CRH1 subfamily. In terms of processing, the GPI-like anchor contains a phosphoceramide lipid group. The anchor position has not been determined.

It localises to the cell membrane. Its subcellular location is the secreted. It is found in the cell wall. The catalysed reaction is Random endo-hydrolysis of N-acetyl-beta-D-glucosaminide (1-&gt;4)-beta-linkages in chitin and chitodextrins.. Dual chitinase/transglycosylase that plays a role in cell wall architecture. Chitinase and transglycosylase activities are coupled. Required for the polysaccharide cross-linking at the septa and the cell wall. More specifically, transfers chitin to 1,6-beta-glucan in the cell wall. This chain is Crh-like protein 3, found in Aspergillus fumigatus (strain ATCC MYA-4609 / CBS 101355 / FGSC A1100 / Af293) (Neosartorya fumigata).